The chain runs to 186 residues: ATP synthase subunit delta (186 aa).

The protein belongs to the ATPase delta chain family. In terms of assembly, F-type ATPases have 2 components, F(1) - the catalytic core - and F(0) - the membrane proton channel. F(1) has five subunits: alpha(3), beta(3), gamma(1), delta(1), epsilon(1). F(0) has three main subunits: a(1), b(2) and c(10-14). The alpha and beta chains form an alternating ring which encloses part of the gamma chain. F(1) is attached to F(0) by a central stalk formed by the gamma and epsilon chains, while a peripheral stalk is formed by the delta and b chains.

The protein resides in the cell inner membrane. Functionally, f(1)F(0) ATP synthase produces ATP from ADP in the presence of a proton or sodium gradient. F-type ATPases consist of two structural domains, F(1) containing the extramembraneous catalytic core and F(0) containing the membrane proton channel, linked together by a central stalk and a peripheral stalk. During catalysis, ATP synthesis in the catalytic domain of F(1) is coupled via a rotary mechanism of the central stalk subunits to proton translocation. Its function is as follows. This protein is part of the stalk that links CF(0) to CF(1). It either transmits conformational changes from CF(0) to CF(1) or is implicated in proton conduction. The chain is ATP synthase subunit delta from Fuscovulum blasticum (Rhodobacter blasticus).